The following is a 487-amino-acid chain: G-patch domain and KOW motifs-containing protein (487 aa).

Disordered stretches follow at residues 65–121 (HKNR…PLLM), 181–232 (VKPL…TGSA), and 295–367 (KVHQ…RPEP). The stretch at 88–116 (AVLSQAVKELIEESRRAQEDNSETNQTLS) forms a coiled coil. 2 stretches are compositionally biased toward basic and acidic residues: residues 96–106 (ELIEESRRAQE) and 200–209 (SALKHLEPQK). A G-patch domain is found at 154-200 (VQQYGMAMLRGMGWKEGEGIGRTFKQDVKPLEQKLRPKGLGLGADRS). Positions 226–253 (GLGTGSAVQIQSGAYKDMYGKVEGIDPD) constitute a KOW 1 domain. Composition is skewed to basic and acidic residues over residues 295–333 (KVHQ…DVKL) and 352–367 (RSPE…RPEP). Residues 428-455 (PKEEGEHVMVVLGKYRGMVGKILHRDKQ) enclose the KOW 2 domain.

Belongs to the MOS2 family. As to quaternary structure, component of the minor spliceosome, which splices U12-type introns.

It localises to the nucleus. RNA-binding protein involved in pre-mRNA splicing. The chain is G-patch domain and KOW motifs-containing protein (gpkow) from Xenopus laevis (African clawed frog).